A 556-amino-acid chain; its full sequence is MAYLMIKKSIYLFFDQPTAVGTLILAFLLTLSPVIIYYEQKKRGLRRNRTAITTTPLPEASGAWPVIGHLLLFMNENDLNHVTLGHMADKYGPIFSLRFGRHRTLVVSSWEMVKECFTGTNDKLFSNRPSSLAVKLMFYDTESYGFAPYGKYWRELRKISTHKLLSNQQLEKFKHLRISEVDNSFKKLHELCSNNKQGGDTTYVASLVRMDDWFAYLTFNVIGRIVSGFQSNAVAGATNSQEKYKLAIDEVSNLMATFAVSDVVPRLGWIDRLTGLTGKMKNCGKKLDAVVGDAVEDHRQKKLKISRNNTGALTEHEEEDFIDVCLSIMEQSQIPGNHPEISVKSIALDMLSGGSDTTKLIMTWTLSLLLNHPDILDKAKEEVDTYFGKKKISDNTPVVDAADVPNLVYIQAIIKESMRLYPASTLMERMTSDDCDVGGFHVPAGTRLWVNVWKMQRDPRVWKDPLVFLPERFLSNDKGMVDVKGQNYELIPFGTGRRICPGASFALEVLHLVLTRLILEFEMKAPEGKIDMRARPGFFHNKVVPLDVQLTPRTLD.

The chain crosses the membrane as a helical span at residues 18–38 (TAVGTLILAFLLTLSPVIIYY). Cys-500 contributes to the heme binding site.

Belongs to the cytochrome P450 family. It depends on heme as a cofactor. Highly expressed in capsules. Expressed is stems.

Its subcellular location is the membrane. It catalyses the reaction (S)-cis-N-methylcanadine + reduced [NADPH--hemoprotein reductase] + O2 = (S)-1-hydroxy-N-methylcanadine + oxidized [NADPH--hemoprotein reductase] + H2O + H(+). The protein operates within alkaloid biosynthesis. Cytochrome P450 involved in the biosynthesis of the benzylisoquinoline alkaloid noscapine. Converts (S)-N-methylcanadine to (S)-1-hydroxy-N-methylcanadine. This chain is (S)-N-methylcanadine 1-hydroxylase CYP82Y1, found in Papaver somniferum (Opium poppy).